The chain runs to 221 residues: UPF0758 protein CGSHiEE_07200 (221 aa).

The MPN domain maps to 99–221 (IINDPETVKL…CYSFAENCLL (123 aa)). The Zn(2+) site is built by His-170, His-172, and Asp-183. The short motif at 170-183 (HNHPSGVTEPSYSD) is the JAMM motif element.

This sequence belongs to the UPF0758 family.

The protein is UPF0758 protein CGSHiEE_07200 of Haemophilus influenzae (strain PittEE).